The primary structure comprises 403 residues: 4-hydroxy-3-methylbut-2-enyl diphosphate reductase (403 aa).

Residue C66 participates in [4Fe-4S] cluster binding. (2E)-4-hydroxy-3-methylbut-2-enyl diphosphate is bound at residue H96. H96 is a binding site for dimethylallyl diphosphate. H96 provides a ligand contact to isopentenyl diphosphate. C157 provides a ligand contact to [4Fe-4S] cluster. H185 is a (2E)-4-hydroxy-3-methylbut-2-enyl diphosphate binding site. H185 lines the dimethylallyl diphosphate pocket. Position 185 (H185) interacts with isopentenyl diphosphate. The active-site Proton donor is E187. T250 is a (2E)-4-hydroxy-3-methylbut-2-enyl diphosphate binding site. C288 lines the [4Fe-4S] cluster pocket. (2E)-4-hydroxy-3-methylbut-2-enyl diphosphate contacts are provided by S317, S318, N319, and S379. Residues S317, S318, N319, and S379 each coordinate dimethylallyl diphosphate. 4 residues coordinate isopentenyl diphosphate: S317, S318, N319, and S379.

Belongs to the IspH family. [4Fe-4S] cluster is required as a cofactor.

The enzyme catalyses isopentenyl diphosphate + 2 oxidized [2Fe-2S]-[ferredoxin] + H2O = (2E)-4-hydroxy-3-methylbut-2-enyl diphosphate + 2 reduced [2Fe-2S]-[ferredoxin] + 2 H(+). It carries out the reaction dimethylallyl diphosphate + 2 oxidized [2Fe-2S]-[ferredoxin] + H2O = (2E)-4-hydroxy-3-methylbut-2-enyl diphosphate + 2 reduced [2Fe-2S]-[ferredoxin] + 2 H(+). Its pathway is isoprenoid biosynthesis; dimethylallyl diphosphate biosynthesis; dimethylallyl diphosphate from (2E)-4-hydroxy-3-methylbutenyl diphosphate: step 1/1. The protein operates within isoprenoid biosynthesis; isopentenyl diphosphate biosynthesis via DXP pathway; isopentenyl diphosphate from 1-deoxy-D-xylulose 5-phosphate: step 6/6. Its function is as follows. Catalyzes the conversion of 1-hydroxy-2-methyl-2-(E)-butenyl 4-diphosphate (HMBPP) into a mixture of isopentenyl diphosphate (IPP) and dimethylallyl diphosphate (DMAPP). Acts in the terminal step of the DOXP/MEP pathway for isoprenoid precursor biosynthesis. The chain is 4-hydroxy-3-methylbut-2-enyl diphosphate reductase from Picosynechococcus sp. (strain ATCC 27264 / PCC 7002 / PR-6) (Agmenellum quadruplicatum).